The chain runs to 257 residues: Imidazole glycerol phosphate synthase subunit HisF (257 aa).

Active-site residues include D11 and D130.

The protein belongs to the HisA/HisF family. As to quaternary structure, heterodimer of HisH and HisF.

The protein localises to the cytoplasm. It carries out the reaction 5-[(5-phospho-1-deoxy-D-ribulos-1-ylimino)methylamino]-1-(5-phospho-beta-D-ribosyl)imidazole-4-carboxamide + L-glutamine = D-erythro-1-(imidazol-4-yl)glycerol 3-phosphate + 5-amino-1-(5-phospho-beta-D-ribosyl)imidazole-4-carboxamide + L-glutamate + H(+). The protein operates within amino-acid biosynthesis; L-histidine biosynthesis; L-histidine from 5-phospho-alpha-D-ribose 1-diphosphate: step 5/9. IGPS catalyzes the conversion of PRFAR and glutamine to IGP, AICAR and glutamate. The HisF subunit catalyzes the cyclization activity that produces IGP and AICAR from PRFAR using the ammonia provided by the HisH subunit. This chain is Imidazole glycerol phosphate synthase subunit HisF, found in Trichormus variabilis (strain ATCC 29413 / PCC 7937) (Anabaena variabilis).